A 293-amino-acid polypeptide reads, in one-letter code: tRNA pseudouridine synthase B (293 aa).

Asp38 functions as the Nucleophile in the catalytic mechanism.

Belongs to the pseudouridine synthase TruB family. Type 1 subfamily.

The catalysed reaction is uridine(55) in tRNA = pseudouridine(55) in tRNA. Responsible for synthesis of pseudouridine from uracil-55 in the psi GC loop of transfer RNAs. This chain is tRNA pseudouridine synthase B, found in Trichormus variabilis (strain ATCC 29413 / PCC 7937) (Anabaena variabilis).